The primary structure comprises 853 residues: Aminotransferase PigE (853 aa).

503 to 504 (GT) is a binding site for pyridoxal 5'-phosphate. Residue Lys645 is modified to N6-(pyridoxal phosphate)lysine. Thr680 is a binding site for pyridoxal 5'-phosphate.

The protein belongs to the class-III pyridoxal-phosphate-dependent aminotransferase family. As to quaternary structure, homodimer. It depends on pyridoxal 5'-phosphate as a cofactor.

Its pathway is antibiotic biosynthesis; prodigiosin biosynthesis. Functionally, involved in the biosynthesis of 2-methyl-3-n-amyl-pyrrole (MAP), one of the terminal products involved in the biosynthesis of the red antibiotic prodigiosin (Pig). Catalyzes the transamination to the aldehyde group of 3-acetyloctanal, resulting in an aminoketone, which spontaneously cyclizes to yield the dihydro form of MAP (H2MAP). The protein is Aminotransferase PigE of Serratia sp. (strain ATCC 39006) (Prodigiosinella confusarubida).